A 231-amino-acid polypeptide reads, in one-letter code: Large ribosomal subunit protein uL1 (231 aa).

The protein belongs to the universal ribosomal protein uL1 family. As to quaternary structure, part of the 50S ribosomal subunit.

Functionally, binds directly to 23S rRNA. The L1 stalk is quite mobile in the ribosome, and is involved in E site tRNA release. In terms of biological role, protein L1 is also a translational repressor protein, it controls the translation of the L11 operon by binding to its mRNA. The chain is Large ribosomal subunit protein uL1 from Agrobacterium fabrum (strain C58 / ATCC 33970) (Agrobacterium tumefaciens (strain C58)).